Here is a 142-residue protein sequence, read N- to C-terminus: MALGIKEIQEIIPHRYPFLLVDKVEELEPGKRAVGYKNVTMNEYFFQGHFPEEPVMPGVLQIEALAQLGAIALLSMDEFKGKIAYFGGINKAKFRRKVVPGDVLKLEIEIVKMKGPAGIGKAIATVDGEKAVECEIMFAVGK.

The active site involves histidine 49.

The protein belongs to the thioester dehydratase family. FabZ subfamily.

Its subcellular location is the cytoplasm. The enzyme catalyses a (3R)-hydroxyacyl-[ACP] = a (2E)-enoyl-[ACP] + H2O. Involved in unsaturated fatty acids biosynthesis. Catalyzes the dehydration of short chain beta-hydroxyacyl-ACPs and long chain saturated and unsaturated beta-hydroxyacyl-ACPs. This is 3-hydroxyacyl-[acyl-carrier-protein] dehydratase FabZ from Clostridium novyi (strain NT).